We begin with the raw amino-acid sequence, 259 residues long: Putative protein phosphatase (259 aa).

A PPM-type phosphatase domain is found at 8–255; the sequence is LFASLSKKGP…DNITLNLINL (248 aa).

The enzyme catalyses O-phospho-L-seryl-[protein] + H2O = L-seryl-[protein] + phosphate. It catalyses the reaction O-phospho-L-threonyl-[protein] + H2O = L-threonyl-[protein] + phosphate. This Mycoplasma pneumoniae (strain ATCC 29342 / M129 / Subtype 1) (Mycoplasmoides pneumoniae) protein is Putative protein phosphatase.